We begin with the raw amino-acid sequence, 424 residues long: Serine--tRNA ligase (424 aa).

L-serine is bound at residue T230 to E232. R261 to E263 provides a ligand contact to ATP. E284 contributes to the L-serine binding site. E348–S351 serves as a coordination point for ATP. S384 is a binding site for L-serine.

Belongs to the class-II aminoacyl-tRNA synthetase family. Type-1 seryl-tRNA synthetase subfamily. As to quaternary structure, homodimer. The tRNA molecule binds across the dimer.

Its subcellular location is the cytoplasm. The enzyme catalyses tRNA(Ser) + L-serine + ATP = L-seryl-tRNA(Ser) + AMP + diphosphate + H(+). It carries out the reaction tRNA(Sec) + L-serine + ATP = L-seryl-tRNA(Sec) + AMP + diphosphate + H(+). Its pathway is aminoacyl-tRNA biosynthesis; selenocysteinyl-tRNA(Sec) biosynthesis; L-seryl-tRNA(Sec) from L-serine and tRNA(Sec): step 1/1. Its function is as follows. Catalyzes the attachment of serine to tRNA(Ser). Is also able to aminoacylate tRNA(Sec) with serine, to form the misacylated tRNA L-seryl-tRNA(Sec), which will be further converted into selenocysteinyl-tRNA(Sec). In Streptococcus pneumoniae serotype 2 (strain D39 / NCTC 7466), this protein is Serine--tRNA ligase.